The chain runs to 384 residues: S-adenosylmethionine synthase (384 aa).

His15 serves as a coordination point for ATP. Asp17 lines the Mg(2+) pocket. Position 43 (Glu43) interacts with K(+). Positions 56 and 99 each coordinate L-methionine. Residues 99–109 (QSPDINQGVDR) are flexible loop. ATP-binding positions include 164-166 (DAK), 230-231 (RF), Asp239, 245-246 (RK), Ala262, and Lys266. Asp239 contacts L-methionine. L-methionine is bound at residue Lys270.

It belongs to the AdoMet synthase family. In terms of assembly, homotetramer; dimer of dimers. Mg(2+) is required as a cofactor. It depends on K(+) as a cofactor.

It is found in the cytoplasm. It carries out the reaction L-methionine + ATP + H2O = S-adenosyl-L-methionine + phosphate + diphosphate. The protein operates within amino-acid biosynthesis; S-adenosyl-L-methionine biosynthesis; S-adenosyl-L-methionine from L-methionine: step 1/1. In terms of biological role, catalyzes the formation of S-adenosylmethionine (AdoMet) from methionine and ATP. The overall synthetic reaction is composed of two sequential steps, AdoMet formation and the subsequent tripolyphosphate hydrolysis which occurs prior to release of AdoMet from the enzyme. The sequence is that of S-adenosylmethionine synthase from Salmonella arizonae (strain ATCC BAA-731 / CDC346-86 / RSK2980).